The chain runs to 212 residues: Pyridoxine/pyridoxamine 5'-phosphate oxidase (212 aa).

Substrate is bound by residues 7–10 and Lys-66; that span reads RREY. Residues 61–66, 76–77, Lys-83, and Gln-105 each bind FMN; these read RIVLLK and YT. Substrate contacts are provided by Tyr-123, Arg-127, and Ser-131. Residues 140 to 141 and Trp-185 contribute to the FMN site; that span reads QS. Position 191–193 (191–193) interacts with substrate; that stretch reads RLH. An FMN-binding site is contributed by Arg-195.

This sequence belongs to the pyridoxamine 5'-phosphate oxidase family. In terms of assembly, homodimer. FMN serves as cofactor.

The catalysed reaction is pyridoxamine 5'-phosphate + O2 + H2O = pyridoxal 5'-phosphate + H2O2 + NH4(+). The enzyme catalyses pyridoxine 5'-phosphate + O2 = pyridoxal 5'-phosphate + H2O2. It participates in cofactor metabolism; pyridoxal 5'-phosphate salvage; pyridoxal 5'-phosphate from pyridoxamine 5'-phosphate: step 1/1. The protein operates within cofactor metabolism; pyridoxal 5'-phosphate salvage; pyridoxal 5'-phosphate from pyridoxine 5'-phosphate: step 1/1. In terms of biological role, catalyzes the oxidation of either pyridoxine 5'-phosphate (PNP) or pyridoxamine 5'-phosphate (PMP) into pyridoxal 5'-phosphate (PLP). This chain is Pyridoxine/pyridoxamine 5'-phosphate oxidase, found in Idiomarina loihiensis (strain ATCC BAA-735 / DSM 15497 / L2-TR).